We begin with the raw amino-acid sequence, 335 residues long: Nucleoid-associated protein YejK (335 aa).

It belongs to the YejK family.

The protein localises to the cytoplasm. It localises to the nucleoid. In Salmonella arizonae (strain ATCC BAA-731 / CDC346-86 / RSK2980), this protein is Nucleoid-associated protein YejK.